We begin with the raw amino-acid sequence, 1076 residues long: Bifunctional glutamine synthetase adenylyltransferase/adenylyl-removing enzyme (1076 aa).

Residues 1-521 (MESSIFKPSS…LHLDIYYRPM (521 aa)) are adenylyl removase. Residues 524–1076 (VNAQMENDQI…LERNRRRAQR (553 aa)) are adenylyl transferase. Residues 1042–1056 (TATASAATQQPQTAP) show a composition bias toward low complexity. A disordered region spans residues 1042–1076 (TATASAATQQPQTAPRPRMHVIAPRLERNRRRAQR).

Belongs to the GlnE family. Mg(2+) is required as a cofactor.

It carries out the reaction [glutamine synthetase]-O(4)-(5'-adenylyl)-L-tyrosine + phosphate = [glutamine synthetase]-L-tyrosine + ADP. It catalyses the reaction [glutamine synthetase]-L-tyrosine + ATP = [glutamine synthetase]-O(4)-(5'-adenylyl)-L-tyrosine + diphosphate. Involved in the regulation of glutamine synthetase GlnA, a key enzyme in the process to assimilate ammonia. When cellular nitrogen levels are high, the C-terminal adenylyl transferase (AT) inactivates GlnA by covalent transfer of an adenylyl group from ATP to specific tyrosine residue of GlnA, thus reducing its activity. Conversely, when nitrogen levels are low, the N-terminal adenylyl removase (AR) activates GlnA by removing the adenylyl group by phosphorolysis, increasing its activity. The regulatory region of GlnE binds the signal transduction protein PII (GlnB) which indicates the nitrogen status of the cell. The protein is Bifunctional glutamine synthetase adenylyltransferase/adenylyl-removing enzyme of Bifidobacterium longum (strain DJO10A).